Reading from the N-terminus, the 413-residue chain is Putative competence-damage inducible protein (413 aa).

The protein belongs to the CinA family.

In Pediococcus pentosaceus (strain ATCC 25745 / CCUG 21536 / LMG 10740 / 183-1w), this protein is Putative competence-damage inducible protein.